The sequence spans 619 residues: DNA polymerase II small subunit (619 aa).

Residues 78 to 122 (EEAEKTVESQETRASELEEGGVSQVSSGELQELKEESPEISTTEE) are disordered. Over residues 79 to 93 (EAEKTVESQETRASE) the composition is skewed to basic and acidic residues.

The protein belongs to the DNA polymerase delta/II small subunit family. As to quaternary structure, heterodimer of a large subunit and a small subunit.

It carries out the reaction DNA(n) + a 2'-deoxyribonucleoside 5'-triphosphate = DNA(n+1) + diphosphate. It catalyses the reaction Exonucleolytic cleavage in the 3'- to 5'-direction to yield nucleoside 5'-phosphates.. Its function is as follows. Possesses two activities: a DNA synthesis (polymerase) and an exonucleolytic activity that degrades single-stranded DNA in the 3' to 5' direction. Has a template-primer preference which is characteristic of a replicative DNA polymerase. The chain is DNA polymerase II small subunit (polB) from Pyrococcus abyssi (strain GE5 / Orsay).